The following is a 537-amino-acid chain: Tyrosine-protein phosphatase CDC14 homolog (537 aa).

The Tyrosine-protein phosphatase domain occupies 182–345 (DFNWISPKFI…QVHFRAYFYE (164 aa)). Cysteine 286 serves as the catalytic Phosphocysteine intermediate. The tract at residues 359–537 (EPLATPPRHP…PKPSKSRLIS (179 aa)) is disordered. Residues 370–382 (NATNGTSQSNIST) are compositionally biased toward polar residues. The span at 400-411 (PPSARRLPSASS) shows a compositional bias: low complexity. Over residues 421 to 437 (ASKQSIQNENKASYSSY) the composition is skewed to polar residues. Residue threonine 453 is modified to Phosphothreonine. Phosphoserine is present on residues serine 468 and serine 470. Residues 490–502 (RRTSGNRWSSGSS) show a composition bias toward low complexity. Serine 513 is modified (phosphoserine). Positions 514–523 (MSSLNNTSNG) are enriched in polar residues. Positions 526 to 537 (AKPKPSKSRLIS) are enriched in basic residues.

It belongs to the protein-tyrosine phosphatase family. Non-receptor class CDC14 subfamily. As to quaternary structure, interacts with ark1 at the kinetochores. Interacts with bir1, cdc25, mid1, nbl1, pic1, and rad24. Post-translationally, phosphorylated by cds1, chk1, pmk1, and cdc2 upon Hydroxylurea and H(2)O(2) stress treatment. Phosphorylation regulates the nucleolar-to-nucleoplasmic transition. Is able to autodephosphorylate.

The protein localises to the nucleus. It is found in the nucleolus. The protein resides in the cytoplasm. It localises to the cytoskeleton. Its subcellular location is the microtubule organizing center. The protein localises to the spindle pole body. It catalyses the reaction O-phospho-L-tyrosyl-[protein] + H2O = L-tyrosyl-[protein] + phosphate. Protein phosphatase which antagonizes mitotic cyclin-dependent kinase cdc2, the inactivation of which is essential for exit from mitosis. To access its substrates, is released from nucleolar sequestration during mitosis. Plays an essential in coordinating the nuclear division cycle with cytokinesis through the cytokinesis checkpoint. Involved in chromosome segregation, where it is required for meiosis I spindle dissambly as well as for establishing two consecutive chromosome segregation phases. Allows damaged actomyosin rings to be maintained to facilitate completion of cell division in response to minor perturbation of the cell division machinery. Dephosphorylates the mitotic inducer cdc25 for its rapid degradation. Down-regulation of cdc25 activity ensures a prompt inactivation of mitotic cdc2 complexes to trigger cell division. Also dephosphorylates cdc2-phosphorylated nsk1, allowing nsk1-binding to kinetochores and spindle. Dephosphorylates ase1, which is essential for spindle midzone assembly and for continuous extension of the anaphase spindle. Tethered to the contractile ring by mid1, where it dephosphorylates cdc15. This chain is Tyrosine-protein phosphatase CDC14 homolog (clp1), found in Schizosaccharomyces pombe (strain 972 / ATCC 24843) (Fission yeast).